Reading from the N-terminus, the 274-residue chain is Undecaprenyl-diphosphatase (274 aa).

Helical transmembrane passes span 44-64 (AKVF…LVYW), 85-105 (LNVV…GKMI), 109-129 (LFIP…ILWA), 185-205 (ATDF…AYSL), 214-234 (VADI…AWLC), and 247-267 (FIPF…TAWT).

This sequence belongs to the UppP family.

It is found in the cell inner membrane. The enzyme catalyses di-trans,octa-cis-undecaprenyl diphosphate + H2O = di-trans,octa-cis-undecaprenyl phosphate + phosphate + H(+). Functionally, catalyzes the dephosphorylation of undecaprenyl diphosphate (UPP). Confers resistance to bacitracin. The protein is Undecaprenyl-diphosphatase of Variovorax paradoxus (strain S110).